Consider the following 380-residue polypeptide: Crotonobetainyl-CoA reductase (380 aa).

Belongs to the acyl-CoA dehydrogenase family. As to quaternary structure, homotetramer. It depends on FAD as a cofactor.

It is found in the cytoplasm. The enzyme catalyses 4-(trimethylamino)butanoyl-CoA + oxidized [electron-transfer flavoprotein] + H(+) = crotonobetainyl-CoA + reduced [electron-transfer flavoprotein]. The protein operates within amine and polyamine metabolism; carnitine metabolism. Its function is as follows. Catalyzes the reduction of crotonobetainyl-CoA to gamma-butyrobetainyl-CoA. This chain is Crotonobetainyl-CoA reductase, found in Escherichia coli (strain UTI89 / UPEC).